The primary structure comprises 187 residues: Elongation factor P (187 aa).

The protein belongs to the elongation factor P family.

It is found in the cytoplasm. Its pathway is protein biosynthesis; polypeptide chain elongation. Involved in peptide bond synthesis. Stimulates efficient translation and peptide-bond synthesis on native or reconstituted 70S ribosomes in vitro. Probably functions indirectly by altering the affinity of the ribosome for aminoacyl-tRNA, thus increasing their reactivity as acceptors for peptidyl transferase. The sequence is that of Elongation factor P from Granulibacter bethesdensis (strain ATCC BAA-1260 / CGDNIH1).